Reading from the N-terminus, the 1464-residue chain is DNA polymerase III PolC-type (1464 aa).

The Exonuclease domain occupies 426 to 582 (YVVFDVETTG…YDAEATGRLL (157 aa)).

The protein belongs to the DNA polymerase type-C family. PolC subfamily.

It is found in the cytoplasm. It catalyses the reaction DNA(n) + a 2'-deoxyribonucleoside 5'-triphosphate = DNA(n+1) + diphosphate. In terms of biological role, required for replicative DNA synthesis. This DNA polymerase also exhibits 3' to 5' exonuclease activity. In Streptococcus thermophilus (strain ATCC BAA-491 / LMD-9), this protein is DNA polymerase III PolC-type.